The primary structure comprises 132 residues: Phosphoribosyl-AMP cyclohydrolase (132 aa).

Mg(2+) is bound at residue aspartate 86. Cysteine 87 lines the Zn(2+) pocket. Residues aspartate 88 and aspartate 90 each contribute to the Mg(2+) site. Zn(2+) is bound by residues cysteine 103 and cysteine 110.

This sequence belongs to the PRA-CH family. Homodimer. Requires Mg(2+) as cofactor. It depends on Zn(2+) as a cofactor.

Its subcellular location is the cytoplasm. It catalyses the reaction 1-(5-phospho-beta-D-ribosyl)-5'-AMP + H2O = 1-(5-phospho-beta-D-ribosyl)-5-[(5-phospho-beta-D-ribosylamino)methylideneamino]imidazole-4-carboxamide. It participates in amino-acid biosynthesis; L-histidine biosynthesis; L-histidine from 5-phospho-alpha-D-ribose 1-diphosphate: step 3/9. Functionally, catalyzes the hydrolysis of the adenine ring of phosphoribosyl-AMP. The protein is Phosphoribosyl-AMP cyclohydrolase of Clavibacter michiganensis subsp. michiganensis (strain NCPPB 382).